The primary structure comprises 95 residues: Small ribosomal subunit protein uS17 (95 aa).

The protein belongs to the universal ribosomal protein uS17 family. In terms of assembly, part of the 30S ribosomal subunit.

In terms of biological role, one of the primary rRNA binding proteins, it binds specifically to the 5'-end of 16S ribosomal RNA. This Phytoplasma australiense protein is Small ribosomal subunit protein uS17.